The sequence spans 594 residues: MWCLLRGLGRPGALARGALGQQQSLGARALASAGSESRDEYSYVVVGAGSAGCVLAGRLTEDPAERVLLLEAGPKDVLAGSKRLSWKIHMPAALVANLCDDRYNWCYHTEVQRGLDGRVLYWPRGRVWGGSSSLNAMVYVRGHAEDYERWQRQGARGWDYAHCLPYFRKAQGHELGASRYRGADGPLRVSRGKTNHPLHCAFLEATQQAGYPLTEDMNGFQQEGFGWMDMTIHEGKRWSAACAYLHPALSRTNLKAEAETLVSRVLFEGTRAVGVEYVKNGQSHRAYASKEVILSGGAINSPQLLMLSGIGNADDLKKLGIPVVCHLPGVGQNLQDHLEIYIQQACTRPITLHSAQKPLRKVCIGLEWLWKFTGEGATAHLETGGFIRSQPGVPHPDIQFHFLPSQVIDHGRVPTQQEAYQVHVGPMRGTSVGWLKLRSANPQDHPVIQPNYLSTETDIEDFRLCVKLTREIFAQEALAPFRGKELQPGSHIQSDKEIDAFVRAKADSAYHPSCTCKMGQPSDPTAVVDPQTRVLGVENLRVVDASIMPSMVSGNLNAPTIMIAEKAADIIKGQPALWDKDVPVYKPRTLATQR.

A mitochondrion-targeting transit peptide spans 1–29 (MWCLLRGLGRPGALARGALGQQQSLGARA). 42 to 71 (SYVVVGAGSAGCVLAGRLTEDPAERVLLLE) is a binding site for FAD. Lysine 436 bears the N6-succinyllysine mark. N6-acetyllysine; alternate occurs at positions 484 and 496. 2 positions are modified to N6-succinyllysine; alternate: lysine 484 and lysine 496. The active-site Proton acceptor is histidine 511. Position 580 is an N6-acetyllysine (lysine 580).

The protein belongs to the GMC oxidoreductase family. FAD serves as cofactor.

It localises to the mitochondrion inner membrane. The enzyme catalyses choline + A = betaine aldehyde + AH2. Its pathway is amine and polyamine biosynthesis; betaine biosynthesis via choline pathway; betaine aldehyde from choline (cytochrome c reductase route): step 1/1. In Homo sapiens (Human), this protein is Choline dehydrogenase, mitochondrial (CHDH).